We begin with the raw amino-acid sequence, 91 residues long: ATP synthase subunit c (91 aa).

Transmembrane regions (helical) follow at residues phenylalanine 4 to isoleucine 24 and isoleucine 53 to leucine 73.

Belongs to the ATPase C chain family. As to quaternary structure, F-type ATPases have 2 components, F(1) - the catalytic core - and F(0) - the membrane proton channel. F(1) has five subunits: alpha(3), beta(3), gamma(1), delta(1), epsilon(1). F(0) has three main subunits: a(1), b(2) and c(10-14). The alpha and beta chains form an alternating ring which encloses part of the gamma chain. F(1) is attached to F(0) by a central stalk formed by the gamma and epsilon chains, while a peripheral stalk is formed by the delta and b chains.

Its subcellular location is the cell inner membrane. In terms of biological role, f(1)F(0) ATP synthase produces ATP from ADP in the presence of a proton or sodium gradient. F-type ATPases consist of two structural domains, F(1) containing the extramembraneous catalytic core and F(0) containing the membrane proton channel, linked together by a central stalk and a peripheral stalk. During catalysis, ATP synthesis in the catalytic domain of F(1) is coupled via a rotary mechanism of the central stalk subunits to proton translocation. Key component of the F(0) channel; it plays a direct role in translocation across the membrane. A homomeric c-ring of between 10-14 subunits forms the central stalk rotor element with the F(1) delta and epsilon subunits. The sequence is that of ATP synthase subunit c from Geotalea daltonii (strain DSM 22248 / JCM 15807 / FRC-32) (Geobacter daltonii).